The following is a 438-amino-acid chain: 3-phosphoshikimate 1-carboxyvinyltransferase (438 aa).

3 residues coordinate 3-phosphoshikimate: Lys25, Ser26, and Arg30. Lys25 serves as a coordination point for phosphoenolpyruvate. Phosphoenolpyruvate contacts are provided by Gly99 and Arg128. 3-phosphoshikimate-binding residues include Ser173, Gln175, Asp325, and Lys352. Gln175 is a phosphoenolpyruvate binding site. Asp325 (proton acceptor) is an active-site residue. Phosphoenolpyruvate is bound by residues Arg356 and Arg398.

Belongs to the EPSP synthase family. Monomer.

Its subcellular location is the cytoplasm. The catalysed reaction is 3-phosphoshikimate + phosphoenolpyruvate = 5-O-(1-carboxyvinyl)-3-phosphoshikimate + phosphate. The protein operates within metabolic intermediate biosynthesis; chorismate biosynthesis; chorismate from D-erythrose 4-phosphate and phosphoenolpyruvate: step 6/7. Its function is as follows. Catalyzes the transfer of the enolpyruvyl moiety of phosphoenolpyruvate (PEP) to the 5-hydroxyl of shikimate-3-phosphate (S3P) to produce enolpyruvyl shikimate-3-phosphate and inorganic phosphate. This chain is 3-phosphoshikimate 1-carboxyvinyltransferase, found in Prochlorococcus marinus subsp. pastoris (strain CCMP1986 / NIES-2087 / MED4).